A 457-amino-acid chain; its full sequence is Exodeoxyribonuclease 7 large subunit (457 aa).

This sequence belongs to the XseA family. In terms of assembly, heterooligomer composed of large and small subunits.

Its subcellular location is the cytoplasm. It catalyses the reaction Exonucleolytic cleavage in either 5'- to 3'- or 3'- to 5'-direction to yield nucleoside 5'-phosphates.. Functionally, bidirectionally degrades single-stranded DNA into large acid-insoluble oligonucleotides, which are then degraded further into small acid-soluble oligonucleotides. The polypeptide is Exodeoxyribonuclease 7 large subunit (Cronobacter sakazakii (strain ATCC BAA-894) (Enterobacter sakazakii)).